We begin with the raw amino-acid sequence, 210 residues long: dTTP/UTP pyrophosphatase (210 aa).

The active-site Proton acceptor is aspartate 80.

Belongs to the Maf family. YhdE subfamily. A divalent metal cation serves as cofactor.

Its subcellular location is the cytoplasm. The catalysed reaction is dTTP + H2O = dTMP + diphosphate + H(+). The enzyme catalyses UTP + H2O = UMP + diphosphate + H(+). Nucleoside triphosphate pyrophosphatase that hydrolyzes dTTP and UTP. May have a dual role in cell division arrest and in preventing the incorporation of modified nucleotides into cellular nucleic acids. The chain is dTTP/UTP pyrophosphatase from Nitratidesulfovibrio vulgaris (strain ATCC 29579 / DSM 644 / CCUG 34227 / NCIMB 8303 / VKM B-1760 / Hildenborough) (Desulfovibrio vulgaris).